A 435-amino-acid chain; its full sequence is IAA-amino acid hydrolase ILR1-like 5 (435 aa).

Positions Met1–Ser25 are cleaved as a signal peptide. Mn(2+)-binding residues include Cys134, His136, Glu170, His194, and His397. The Prevents secretion from ER motif lies at Lys432–Leu435.

Belongs to the peptidase M20 family.

Its subcellular location is the endoplasmic reticulum lumen. Its function is as follows. Hydrolyzes certain amino acid conjugates of the plant growth regulator indole-3-acetic acid (IAA). This chain is IAA-amino acid hydrolase ILR1-like 5, found in Arabidopsis thaliana (Mouse-ear cress).